The following is a 124-amino-acid chain: UPF0102 protein HCH_05895 (124 aa).

The protein belongs to the UPF0102 family.

The sequence is that of UPF0102 protein HCH_05895 from Hahella chejuensis (strain KCTC 2396).